A 794-amino-acid polypeptide reads, in one-letter code: Tail tubular protein gp12 (794 aa).

As to quaternary structure, interacts with head-to-tail connector protein gp8, the tail component gp11, and the fiber protein gp17.

It is found in the virion. Functionally, structural component of the short non-contractile tail. The tail complex is involved in viral genome delivery. Forms the end of the tail, including the canonical tube, the nozzle, and the small extensions below the fibers. Once the tail tubular structure is formed, the interface between gp11 and gp12 generates the proper environment to interact with the six gp17 trimers. This is Tail tubular protein gp12 from Escherichia coli (Bacteriophage T7).